Here is a 124-residue protein sequence, read N- to C-terminus: S-adenosylmethionine decarboxylase proenzyme (124 aa).

Serine 63 (schiff-base intermediate with substrate; via pyruvic acid) is an active-site residue. Serine 63 is modified (pyruvic acid (Ser); by autocatalysis). Catalysis depends on histidine 68, which acts as the Proton acceptor; for processing activity. The active-site Proton donor; for catalytic activity is the cysteine 83.

The protein belongs to the prokaryotic AdoMetDC family. Type 1 subfamily. As to quaternary structure, heterotetramer of two alpha and two beta chains arranged as a dimer of alpha/beta heterodimers. The cofactor is pyruvate. Is synthesized initially as an inactive proenzyme. Formation of the active enzyme involves a self-maturation process in which the active site pyruvoyl group is generated from an internal serine residue via an autocatalytic post-translational modification. Two non-identical subunits are generated from the proenzyme in this reaction, and the pyruvate is formed at the N-terminus of the alpha chain, which is derived from the carboxyl end of the proenzyme. The post-translation cleavage follows an unusual pathway, termed non-hydrolytic serinolysis, in which the side chain hydroxyl group of the serine supplies its oxygen atom to form the C-terminus of the beta chain, while the remainder of the serine residue undergoes an oxidative deamination to produce ammonia and the pyruvoyl group blocking the N-terminus of the alpha chain.

It carries out the reaction S-adenosyl-L-methionine + H(+) = S-adenosyl 3-(methylsulfanyl)propylamine + CO2. It functions in the pathway amine and polyamine biosynthesis; S-adenosylmethioninamine biosynthesis; S-adenosylmethioninamine from S-adenosyl-L-methionine: step 1/1. Catalyzes the decarboxylation of S-adenosylmethionine to S-adenosylmethioninamine (dcAdoMet), the propylamine donor required for the synthesis of the polyamines spermine and spermidine from the diamine putrescine. In Thermoanaerobacter pseudethanolicus (strain ATCC 33223 / 39E) (Clostridium thermohydrosulfuricum), this protein is S-adenosylmethionine decarboxylase proenzyme.